A 155-amino-acid polypeptide reads, in one-letter code: Transcriptional repressor NrdR (155 aa).

Residues 3-34 (CPYCQNADTRVVDSRLIGEGEQVRRRRQCPSC) fold into a zinc finger. The 91-residue stretch at 49–139 (PRVVKSDGRR…VYRRFEDVGA (91 aa)) folds into the ATP-cone domain.

The protein belongs to the NrdR family. The cofactor is Zn(2+).

Its function is as follows. Negatively regulates transcription of bacterial ribonucleotide reductase nrd genes and operons by binding to NrdR-boxes. This Halorhodospira halophila (strain DSM 244 / SL1) (Ectothiorhodospira halophila (strain DSM 244 / SL1)) protein is Transcriptional repressor NrdR.